We begin with the raw amino-acid sequence, 196 residues long: Urease accessory protein UreE (196 aa).

Residues 150–196 (RGAYSGGHDHGHAHAHSHAEAHSHAHGESHSHSHSHSHDDHHHHDHD) are disordered. A compositionally biased stretch (basic and acidic residues) spans 156-196 (GHDHGHAHAHSHAEAHSHAHGESHSHSHSHSHDDHHHHDHD).

This sequence belongs to the UreE family.

The protein localises to the cytoplasm. Functionally, involved in urease metallocenter assembly. Binds nickel. Probably functions as a nickel donor during metallocenter assembly. This Mesorhizobium japonicum (strain LMG 29417 / CECT 9101 / MAFF 303099) (Mesorhizobium loti (strain MAFF 303099)) protein is Urease accessory protein UreE.